A 336-amino-acid chain; its full sequence is Heme A synthase (336 aa).

Helical transmembrane passes span 5 to 25, 92 to 112, 117 to 137, 153 to 173, and 191 to 211; these read LTRWLLTCCIMVVAMIIVGGI, GRATGLIYILPLIYFYFKGII, ILSYIIVLLLFCVQGFMGWYM, LAFHLIIAVIIYHLLFYKLVK, and LIFSVAAIAMIYVQIFLGALV. A heme-binding site is contributed by histidine 255. The next 3 helical transmembrane spans lie at 257–277, 284–304, and 307–327; these read LGAYSLSIIVIALIISLLKVK, VAFYLSIALLIQLSTGVITLL, and VPIIAASMHQFFAIVLLSVVI. Residue histidine 315 coordinates heme.

Belongs to the COX15/CtaA family. Type 2 subfamily. In terms of assembly, interacts with CtaB. Heme b is required as a cofactor.

The protein localises to the cell membrane. It carries out the reaction Fe(II)-heme o + 2 A + H2O = Fe(II)-heme a + 2 AH2. It participates in porphyrin-containing compound metabolism; heme A biosynthesis; heme A from heme O: step 1/1. Catalyzes the conversion of heme O to heme A by two successive hydroxylations of the methyl group at C8. The first hydroxylation forms heme I, the second hydroxylation results in an unstable dihydroxymethyl group, which spontaneously dehydrates, resulting in the formyl group of heme A. This chain is Heme A synthase, found in Rickettsia bellii (strain OSU 85-389).